The chain runs to 162 residues: MAAPKARALGPEEKDECMKIFDIFDRNAENIAPVSDTMDMLTKLGQTYTKRETEAIMKEARGPKGDKKNIGPEEWLTLCSKWVRQDDEEEILRAFKVFDANGDGVIDFDEFKFIMQKVGEEPLTDAEVEEAMKEADEDGNGVIDIPEFMDLIKKSKNALKES.

At alanine 2 the chain carries N-acetylalanine. EF-hand domains follow at residues 12 to 47 (EEKD…LGQT), 49 to 84 (TKRE…KWVR), 86 to 121 (DDEE…VGEE), and 123 to 158 (LTDA…SKNA). Lysine 96 bears the N6,N6,N6-trimethyllysine mark. Ca(2+) is bound by residues aspartate 99, asparagine 101, aspartate 103, and glutamate 110. Lysine 117 carries the N6,N6,N6-trimethyllysine modification. 4 residues coordinate Ca(2+): aspartate 136, aspartate 138, asparagine 140, and glutamate 147.

It is found in the cytoplasm. Functionally, the exact function of this protein is not yet known. It interacts with CAVPT, a protein also of unknown function, in a calcium-dependent way. This protein binds two calcium ions. This chain is Calcium vector protein, found in Branchiostoma lanceolatum (Common lancelet).